The sequence spans 314 residues: Ornithine carbamoyltransferase (314 aa).

Residues 58 to 61 (STRT), Gln-85, Arg-109, and 136 to 139 (HPAQ) each bind carbamoyl phosphate. Residues Asn-169, Asp-233, and 237–238 (SM) contribute to the L-ornithine site. Residues 273–274 (CL) and Arg-301 contribute to the carbamoyl phosphate site.

This sequence belongs to the aspartate/ornithine carbamoyltransferase superfamily. OTCase family.

The protein localises to the cytoplasm. It carries out the reaction carbamoyl phosphate + L-ornithine = L-citrulline + phosphate + H(+). Its pathway is amino-acid degradation; L-arginine degradation via ADI pathway; carbamoyl phosphate from L-arginine: step 2/2. Reversibly catalyzes the transfer of the carbamoyl group from carbamoyl phosphate (CP) to the N(epsilon) atom of ornithine (ORN) to produce L-citrulline. This is Ornithine carbamoyltransferase from Staphylothermus marinus (strain ATCC 43588 / DSM 3639 / JCM 9404 / F1).